The primary structure comprises 484 residues: Iroquois-class homeodomain protein IRX-5 (484 aa).

The segment at residues Asp112–Asn174 is a DNA-binding region (homeobox; TALE-type). 2 disordered regions span residues Met176–Phe393 and Gly424–Leu443. Positions Glu185–Glu202 are enriched in acidic residues. 2 stretches are compositionally biased toward basic and acidic residues: residues Pro203–Leu212 and Ser249–Arg265. The residue at position 273 (Ser273) is a Phosphoserine. The span at Ser318–Ala328 shows a compositional bias: pro residues. Over residues Ser375–Ala389 the composition is skewed to low complexity. A Phosphoserine modification is found at Ser465.

Belongs to the TALE/IRO homeobox family. As to expression, not expressed in the developing metanephric kidney or adult kidney.

It localises to the nucleus. In terms of biological role, establishes the cardiac repolarization gradient by its repressive actions on the KCND2 potassium-channel gene. Required for retinal cone bipolar cell differentiation. May regulate contrast adaptation in the retina and control specific aspects of visual function in circuits of the mammalian retina. Involved in craniofacial and gonadal development. Modulates the migration of progenitor cell populations in branchial arches and gonads by repressing CXCL12. The sequence is that of Iroquois-class homeodomain protein IRX-5 (Irx5) from Mus musculus (Mouse).